The chain runs to 732 residues: Ubiquitin carboxyl-terminal hydrolase 21 (732 aa).

Residues 1-10 (MAEFSDPPPS) show a composition bias toward pro residues. Positions 1–111 (MAEFSDPPPS…ISPVSNNNHL (111 aa)) are disordered. Polar residues-rich tracts occupy residues 11–31 (NLSSSHKLTKPNQTLDESSPT) and 38–53 (VTNSLSLSSPIRQIQA). Residues 55–69 (SPAKPDGSSSSPPDK) are compositionally biased toward low complexity. A USP domain is found at 163-469 (AGLYNSGNTC…PAYILFYARE (307 aa)). Cys-172 serves as the catalytic Nucleophile. His-428 functions as the Proton acceptor in the catalytic mechanism. Residues 534 to 732 (KEEVFHSAES…SSNMRRSIKL (199 aa)) are disordered. Residues 540 to 551 (SAESSNNEDSSA) show a composition bias toward low complexity. The segment covering 583–609 (AYIDKSEKPFAETSQPKEPKPFADRAS) has biased composition (basic and acidic residues). The span at 719–732 (KKKKSSNMRRSIKL) shows a compositional bias: basic residues.

It belongs to the peptidase C19 family.

The enzyme catalyses Thiol-dependent hydrolysis of ester, thioester, amide, peptide and isopeptide bonds formed by the C-terminal Gly of ubiquitin (a 76-residue protein attached to proteins as an intracellular targeting signal).. In terms of biological role, recognizes and hydrolyzes the peptide bond at the C-terminal Gly of ubiquitin. Involved in the processing of poly-ubiquitin precursors as well as that of ubiquitinated proteins. In Arabidopsis thaliana (Mouse-ear cress), this protein is Ubiquitin carboxyl-terminal hydrolase 21 (UBP21).